Here is a 287-residue protein sequence, read N- to C-terminus: ATP synthase gamma chain (287 aa).

Belongs to the ATPase gamma chain family. In terms of assembly, F-type ATPases have 2 components, CF(1) - the catalytic core - and CF(0) - the membrane proton channel. CF(1) has five subunits: alpha(3), beta(3), gamma(1), delta(1), epsilon(1). CF(0) has three main subunits: a, b and c.

It localises to the cell inner membrane. Produces ATP from ADP in the presence of a proton gradient across the membrane. The gamma chain is believed to be important in regulating ATPase activity and the flow of protons through the CF(0) complex. The polypeptide is ATP synthase gamma chain (Ruthia magnifica subsp. Calyptogena magnifica).